The primary structure comprises 247 residues: C-type lectin domain family 7 member A (247 aa).

Residues 1 to 44 (MEYHPDLENLDEDGYTQLHFDSRSNTRIAVVSEKGSCVASPPWR) are Cytoplasmic-facing. Residues 15–18 (YTQL) carry the ITAM-like motif. A helical; Signal-anchor for type II membrane protein membrane pass occupies residues 45–65 (LIAVILGILCLVILVIAVVLG). At 66–247 (TMAIWRPNSG…CSICEKKFSM (182 aa)) the chain is on the extracellular side. Residues 81 to 105 (NGYFPSRNKENHSQPTQSPLEESVT) are disordered. N-linked (GlcNAc...) asparagine glycosylation occurs at Asn-91. Over residues 93-105 (SQPTQSPLEESVT) the composition is skewed to polar residues. Cystine bridges form between Cys-120–Cys-131, Cys-148–Cys-241, and Cys-220–Cys-233. One can recognise a C-type lectin domain in the interval 127-242 (YEKSCYLFSP…CSVPSCSICE (116 aa)). 146–153 (RQCSQLGS) contributes to the (1,3-beta-D-glucosyl)n binding site. Positions 157, 159, and 163 each coordinate a divalent metal cation. Glu-195 serves as a coordination point for (1,3-beta-D-glucosyl)n. A divalent metal cation is bound at residue Glu-242.

Homodimer. Interacts with SYK; participates in leukocyte activation in presence of fungal pathogens. Interacts with CD37; this interaction controls CLEC7A-mediated IL-6 production. Phosphorylated on tyrosine residues in response to beta-glucan binding. As to expression, detected in dendritic cells, in paracortical and medullary regions of lymph nodes, and in spleen red pulp and white pulp.

It is found in the cell membrane. In terms of biological role, lectin that functions as a pattern recognizing receptor (PRR) specific for beta-1,3-linked and beta-1,6-linked glucans, which constitute cell wall constituents from pathogenic bacteria and fungi. Necessary for the TLR2-mediated inflammatory response and activation of NF-kappa-B: upon beta-glucan binding, recruits SYK via its ITAM motif and promotes a signaling cascade that activates some CARD domain-BCL10-MALT1 (CBM) signalosomes, leading to the activation of NF-kappa-B and MAP kinase p38 (MAPK11, MAPK12, MAPK13 and/or MAPK14) pathways which stimulate expression of genes encoding pro-inflammatory cytokines and chemokines. Enhances cytokine production in macrophages and dendritic cells. Mediates production of reactive oxygen species in the cell. Mediates phagocytosis of C.albicans conidia. Binds T-cells in a way that does not involve their surface glycans and plays a role in T-cell activation. Stimulates T-cell proliferation. Induces phosphorylation of SCIMP after binding beta-glucans. The polypeptide is C-type lectin domain family 7 member A (CLEC7A) (Macaca mulatta (Rhesus macaque)).